A 69-amino-acid chain; its full sequence is UPF0337 protein ECA0631 (69 aa).

The protein belongs to the UPF0337 (CsbD) family.

The chain is UPF0337 protein ECA0631 from Pectobacterium atrosepticum (strain SCRI 1043 / ATCC BAA-672) (Erwinia carotovora subsp. atroseptica).